Reading from the N-terminus, the 217-residue chain is tRNA (guanine-N(7)-)-methyltransferase (217 aa).

Glutamate 44, glutamate 69, aspartate 96, and aspartate 118 together coordinate S-adenosyl-L-methionine. Residue aspartate 118 is part of the active site. Substrate contacts are provided by residues lysine 122, aspartate 154, and 191-194 (TEYE).

Belongs to the class I-like SAM-binding methyltransferase superfamily. TrmB family.

The enzyme catalyses guanosine(46) in tRNA + S-adenosyl-L-methionine = N(7)-methylguanosine(46) in tRNA + S-adenosyl-L-homocysteine. It participates in tRNA modification; N(7)-methylguanine-tRNA biosynthesis. Functionally, catalyzes the formation of N(7)-methylguanine at position 46 (m7G46) in tRNA. The polypeptide is tRNA (guanine-N(7)-)-methyltransferase (Bacillus cereus (strain B4264)).